We begin with the raw amino-acid sequence, 632 residues long: MNDTRPLLDRILSPRDLKKLSTKQLQQLADECRKELIELIAMNGGHFASSLGVTELTVALHHVYNTEEDRIVWDVGHQAYIHKMLTGRRSRMQTNRKYGGIAGFPKIHESPHDAFGTGHASTSISAAAGMAAGRDLKGGREKMVAVIGDGSMTGGMAFEAMNHLGDLKSDVLVILNDNQMAISPSTGGLKNHLVDITLNKTYNKARRLLWNSMSLLNHEGAKNALRRLEDGMKAALTPGAFFEALGLRYFGPIDGHDMGRLVRALKEMHELPNPKLLHVVTTKGKGFLPAEENQSGWHAHSGGFDTTTGMTAKKTGAPDPPKYQEIFGEALVEMALKDPAITAITAAMPSGTSLDLFEKAAPDRFYDVGIAEGHAVTFAAGLALEGLKPVCAIYSTFLQRALDQLIHDVALQNLHVVFAIDRAGLVGEDGPTHHGAFDLSFLHAVPGLTIMAPSDAQELRDMLHTALYHIEGPVAIRYPRGSSGGGPLRKDFTRLEPGRGRIIREGTGPVLFAIGSMVQAAVEAAALLEAEGIKPDIVDMRFLKPLDTALIDRLAASATHIVTIEENSILGGLGSAVSDHLASSPKKTPLLKIGLPDRFITHGSMQDLYRETGLDAAGIAEHVKEFYRTPVH.

Thiamine diphosphate is bound by residues His77 and 118-120; that span reads GHA. Asp149 provides a ligand contact to Mg(2+). Thiamine diphosphate-binding positions include 150-151, Asn178, Phe287, and Glu372; that span reads GS. Mg(2+) is bound at residue Asn178.

This sequence belongs to the transketolase family. DXPS subfamily. Homodimer. It depends on Mg(2+) as a cofactor. Thiamine diphosphate is required as a cofactor.

The enzyme catalyses D-glyceraldehyde 3-phosphate + pyruvate + H(+) = 1-deoxy-D-xylulose 5-phosphate + CO2. It functions in the pathway metabolic intermediate biosynthesis; 1-deoxy-D-xylulose 5-phosphate biosynthesis; 1-deoxy-D-xylulose 5-phosphate from D-glyceraldehyde 3-phosphate and pyruvate: step 1/1. Catalyzes the acyloin condensation reaction between C atoms 2 and 3 of pyruvate and glyceraldehyde 3-phosphate to yield 1-deoxy-D-xylulose-5-phosphate (DXP). This Chlorobium luteolum (strain DSM 273 / BCRC 81028 / 2530) (Pelodictyon luteolum) protein is 1-deoxy-D-xylulose-5-phosphate synthase.